The sequence spans 299 residues: Probable 3-hydroxyisobutyrate dehydrogenase-like 2, mitochondrial (299 aa).

NAD(+)-binding positions include 14 to 43 (TRIG…TVYA) and S108. Residue K182 is part of the active site. Residue K250 participates in NAD(+) binding.

Belongs to the HIBADH-related family. 3-hydroxyisobutyrate dehydrogenase subfamily.

The protein localises to the mitochondrion. The enzyme catalyses 3-hydroxy-2-methylpropanoate + NAD(+) = 2-methyl-3-oxopropanoate + NADH + H(+). It functions in the pathway amino-acid degradation; L-valine degradation. This chain is Probable 3-hydroxyisobutyrate dehydrogenase-like 2, mitochondrial, found in Arabidopsis thaliana (Mouse-ear cress).